The following is a 199-amino-acid chain: Potassium-transporting ATPase KdpC subunit (199 aa).

Residues 7–27 traverse the membrane as a helical segment; it reads PAIVLLLALTLLTGLAYPLAM. A disordered region spans residues 67–86; the sequence is HGRPSATTAADPQDSSKTVP. Over residues 71 to 84 the composition is skewed to polar residues; it reads SATTAADPQDSSKT.

This sequence belongs to the KdpC family. In terms of assembly, the system is composed of three essential subunits: KdpA, KdpB and KdpC.

Its subcellular location is the cell inner membrane. Functionally, part of the high-affinity ATP-driven potassium transport (or Kdp) system, which catalyzes the hydrolysis of ATP coupled with the electrogenic transport of potassium into the cytoplasm. This subunit acts as a catalytic chaperone that increases the ATP-binding affinity of the ATP-hydrolyzing subunit KdpB by the formation of a transient KdpB/KdpC/ATP ternary complex. The chain is Potassium-transporting ATPase KdpC subunit from Rhodopseudomonas palustris (strain BisB18).